Here is a 353-residue protein sequence, read N- to C-terminus: Photosystem II D2 protein (353 aa).

T2 carries the N-acetylthreonine modification. T2 bears the Phosphothreonine mark. Residues 41 to 61 form a helical membrane-spanning segment; the sequence is CAYFAVGGWFTGTTFVTSWYT. Chlorophyll a is bound at residue H118. Residues 125-141 form a helical membrane-spanning segment; it reads GFMLRQFELARSVQLRP. Pheophytin a contacts are provided by Q130 and N143. The helical transmembrane segment at 153-166 threads the bilayer; sequence VFVSVFLIYPLGQS. H198 contributes to the chlorophyll a binding site. The chain crosses the membrane as a helical span at residues 208–228; it reads AALLCAIHGATVENTLFEDGD. A plastoquinone contacts are provided by H215 and F262. H215 is a Fe cation binding site. A Fe cation-binding site is contributed by H269. A helical transmembrane segment spans residues 279–295; the sequence is GLWMSALGVVGLALNLR.

Belongs to the reaction center PufL/M/PsbA/D family. PSII is composed of 1 copy each of membrane proteins PsbA, PsbB, PsbC, PsbD, PsbE, PsbF, PsbH, PsbI, PsbJ, PsbK, PsbL, PsbM, PsbT, PsbX, PsbY, PsbZ, Psb30/Ycf12, at least 3 peripheral proteins of the oxygen-evolving complex and a large number of cofactors. It forms dimeric complexes. The D1/D2 heterodimer binds P680, chlorophylls that are the primary electron donor of PSII, and subsequent electron acceptors. It shares a non-heme iron and each subunit binds pheophytin, quinone, additional chlorophylls, carotenoids and lipids. There is also a Cl(-1) ion associated with D1 and D2, which is required for oxygen evolution. The PSII complex binds additional chlorophylls, carotenoids and specific lipids. is required as a cofactor.

Its subcellular location is the plastid. The protein resides in the chloroplast thylakoid membrane. The enzyme catalyses 2 a plastoquinone + 4 hnu + 2 H2O = 2 a plastoquinol + O2. Photosystem II (PSII) is a light-driven water:plastoquinone oxidoreductase that uses light energy to abstract electrons from H(2)O, generating O(2) and a proton gradient subsequently used for ATP formation. It consists of a core antenna complex that captures photons, and an electron transfer chain that converts photonic excitation into a charge separation. The D1/D2 (PsbA/PsbD) reaction center heterodimer binds P680, the primary electron donor of PSII as well as several subsequent electron acceptors. D2 is needed for assembly of a stable PSII complex. This Cicer arietinum (Chickpea) protein is Photosystem II D2 protein.